Here is a 223-residue protein sequence, read N- to C-terminus: MAKRINFTSCLIFTSCFTAFIVSLCLLVSSCVNLVNDVIIPSVHMSRRADITPFIDNYTINFTDLHFFTDGANASVPQPEAIFINSNNFSLYAHNCSARDNCSVHSASITQEGRCYHYSRAKYSFAGCLEFCRSYSPCYYLINPQKHMTAVRQNINESDTYWVGIFKSPKNTWVDLDNSSVTGVHDLYEDSYCAYIGLYTEVPWPSFYCDTPRRCLCGGSKGI.

A signal peptide spans 1-31; it reads MAKRINFTSCLIFTSCFTAFIVSLCLLVSSC. A C-type lectin domain is found at 111–218; the sequence is QEGRCYHYSR…CDTPRRCLCG (108 aa). Cys-193 and Cys-209 are disulfide-bonded.

This chain is Putative C-type lectin protein 51 (51), found in Equine herpesvirus 2 (strain 86/87) (EHV-2).